A 306-amino-acid chain; its full sequence is Elongation factor Ts (306 aa).

The tract at residues 80-83 is involved in Mg(2+) ion dislocation from EF-Tu; it reads TDFV.

Belongs to the EF-Ts family.

It localises to the cytoplasm. Functionally, associates with the EF-Tu.GDP complex and induces the exchange of GDP to GTP. It remains bound to the aminoacyl-tRNA.EF-Tu.GTP complex up to the GTP hydrolysis stage on the ribosome. In Leptothrix cholodnii (strain ATCC 51168 / LMG 8142 / SP-6) (Leptothrix discophora (strain SP-6)), this protein is Elongation factor Ts.